A 61-amino-acid chain; its full sequence is Bowman-Birk type proteinase inhibitor B5 (61 aa).

6 disulfide bridges follow: cysteine 5-cysteine 60, cysteine 6-cysteine 22, cysteine 9-cysteine 56, cysteine 12-cysteine 20, cysteine 29-cysteine 36, and cysteine 33-cysteine 48.

Belongs to the Bowman-Birk serine protease inhibitor family. As to expression, expressed in bulb (at protein level).

Serine protease inhibitor. Inhibits trypsin (Ki = 41 nM) and weakly inhibits chymotrypsin (Ki = 410 nM). Does not inhibit bacterial subtilisin. The polypeptide is Bowman-Birk type proteinase inhibitor B5 (Hyacinthus orientalis (Common hyacinth)).